The primary structure comprises 582 residues: Proline--tRNA ligase (582 aa).

The protein belongs to the class-II aminoacyl-tRNA synthetase family. ProS type 1 subfamily. As to quaternary structure, homodimer.

The protein localises to the cytoplasm. It catalyses the reaction tRNA(Pro) + L-proline + ATP = L-prolyl-tRNA(Pro) + AMP + diphosphate. Its function is as follows. Catalyzes the attachment of proline to tRNA(Pro) in a two-step reaction: proline is first activated by ATP to form Pro-AMP and then transferred to the acceptor end of tRNA(Pro). As ProRS can inadvertently accommodate and process non-cognate amino acids such as alanine and cysteine, to avoid such errors it has two additional distinct editing activities against alanine. One activity is designated as 'pretransfer' editing and involves the tRNA(Pro)-independent hydrolysis of activated Ala-AMP. The other activity is designated 'posttransfer' editing and involves deacylation of mischarged Ala-tRNA(Pro). The misacylated Cys-tRNA(Pro) is not edited by ProRS. This chain is Proline--tRNA ligase, found in Mycolicibacterium paratuberculosis (strain ATCC BAA-968 / K-10) (Mycobacterium paratuberculosis).